The sequence spans 118 residues: Large ribosomal subunit protein uL18 (118 aa).

It belongs to the universal ribosomal protein uL18 family. In terms of assembly, part of the 50S ribosomal subunit; part of the 5S rRNA/L5/L18/L25 subcomplex. Contacts the 5S and 23S rRNAs.

Its function is as follows. This is one of the proteins that bind and probably mediate the attachment of the 5S RNA into the large ribosomal subunit, where it forms part of the central protuberance. This is Large ribosomal subunit protein uL18 from Rickettsia bellii (strain OSU 85-389).